A 230-amino-acid chain; its full sequence is Fibrillarin-like rRNA/tRNA 2'-O-methyltransferase (230 aa).

S-adenosyl-L-methionine is bound by residues 89–90, 107–108, 132–133, and 152–155; these read TT, EV, DA, and DISQ.

It belongs to the methyltransferase superfamily. Fibrillarin family. As to quaternary structure, interacts with nop5. Component of box C/D small ribonucleoprotein (sRNP) particles that contain rpl7ae, FlpA and nop5, plus a guide RNA.

Functionally, involved in pre-rRNA and tRNA processing. Utilizes the methyl donor S-adenosyl-L-methionine to catalyze the site-specific 2'-hydroxyl methylation of ribose moieties in rRNA and tRNA. Site specificity is provided by a guide RNA that base pairs with the substrate. Methylation occurs at a characteristic distance from the sequence involved in base pairing with the guide RNA. The chain is Fibrillarin-like rRNA/tRNA 2'-O-methyltransferase from Thermoplasma acidophilum (strain ATCC 25905 / DSM 1728 / JCM 9062 / NBRC 15155 / AMRC-C165).